Reading from the N-terminus, the 102-residue chain is Spexin prohormone 1 (102 aa).

Residues 1 to 26 (MKDLRTLAAYALALLLLATFVSHSWS) form the signal peptide. Positions 27–35 (APKGSFQRR) are excised as a propeptide. Gln-49 bears the Glutamine amide mark. Positions 50 to 102 (GRRFVSEDRNEGDLYDTIRLESRSQNTENLSISKAAAFLLNILQQARDEDEPY) are excised as a propeptide.

It belongs to the spexin family. In terms of tissue distribution, mainly expressed in the brain and ovary. Detected bilaterally in the adult brainstem. Expressed in neurons in the dorsal habenula (dHb). In the dHb some neurons project into the interpeduncular nucleus (IPN) where expression often overlaps with galr2a and galr2b. Weakly expressed in the liver, intestine, kidney, heart and gill.

Its subcellular location is the secreted. It localises to the extracellular space. It is found in the cytoplasmic vesicle. The protein resides in the secretory vesicle. Functionally, plays a role in the regulation of food intake and energy metabolism. May also be involved in suppressing the anxiety response by promoting the expression of serotonin-related genes such as fev, tph2 and slc6a4a. Acts as a ligand for galanin receptors galr2a and galr2b. Brain administration of the peptide inhibits food consumption and elevates levels of glucose, triacylglycerol and cholesterol in the serum. Likely to control food intake by regulating appetite related genes which includes the negative regulation of the orexigenic factor agrp. By controlling food intake it may act as a satiety factor in energy metabolism. The protein is Spexin prohormone 1 (spx) of Danio rerio (Zebrafish).